Reading from the N-terminus, the 527-residue chain is Glutamate--cysteine ligase (527 aa).

It belongs to the glutamate--cysteine ligase type 1 family. Type 1 subfamily.

It carries out the reaction L-cysteine + L-glutamate + ATP = gamma-L-glutamyl-L-cysteine + ADP + phosphate + H(+). It functions in the pathway sulfur metabolism; glutathione biosynthesis; glutathione from L-cysteine and L-glutamate: step 1/2. This chain is Glutamate--cysteine ligase, found in Bordetella parapertussis (strain 12822 / ATCC BAA-587 / NCTC 13253).